The sequence spans 147 residues: MRCLFCRSDDTKVIDSRTSEDGISIRRRRECQLCKRRFSTLETASLTVIKRNGTSEPFRREKVVTGVHKACQGRPVTKADLAVLAQRVEESLRASGNSQVDSNDIGLAILPELLRLDQVAYIRFASVYQDFDSLEDFSRAVERLKNQ.

Residues 3-34 fold into a zinc finger; it reads CLFCRSDDTKVIDSRTSEDGISIRRRRECQLC. The ATP-cone domain occupies 46–136; it reads LTVIKRNGTS…VYQDFDSLED (91 aa).

It belongs to the NrdR family. Zn(2+) serves as cofactor.

Its function is as follows. Negatively regulates transcription of bacterial ribonucleotide reductase nrd genes and operons by binding to NrdR-boxes. In Tropheryma whipplei (strain TW08/27) (Whipple's bacillus), this protein is Transcriptional repressor NrdR.